We begin with the raw amino-acid sequence, 365 residues long: tRNA/tmRNA (uracil-C(5))-methyltransferase (365 aa).

S-adenosyl-L-methionine contacts are provided by Gln-189, Tyr-217, Asn-222, Glu-238, and Asp-298. The active-site Nucleophile is the Cys-323. Glu-357 acts as the Proton acceptor in catalysis.

The protein belongs to the class I-like SAM-binding methyltransferase superfamily. RNA M5U methyltransferase family. TrmA subfamily.

The catalysed reaction is uridine(54) in tRNA + S-adenosyl-L-methionine = 5-methyluridine(54) in tRNA + S-adenosyl-L-homocysteine + H(+). It carries out the reaction uridine(341) in tmRNA + S-adenosyl-L-methionine = 5-methyluridine(341) in tmRNA + S-adenosyl-L-homocysteine + H(+). Its function is as follows. Dual-specificity methyltransferase that catalyzes the formation of 5-methyluridine at position 54 (m5U54) in all tRNAs, and that of position 341 (m5U341) in tmRNA (transfer-mRNA). The protein is tRNA/tmRNA (uracil-C(5))-methyltransferase of Shewanella amazonensis (strain ATCC BAA-1098 / SB2B).